Consider the following 281-residue polypeptide: Diaminopimelate epimerase (281 aa).

The substrate site is built by Asn11 and Asn65. Residue Cys74 is the Proton donor of the active site. Substrate-binding positions include 75 to 76 (GN), Asn164, Asn197, and 215 to 216 (ER). The active-site Proton acceptor is the Cys224. 225–226 (GT) lines the substrate pocket.

It belongs to the diaminopimelate epimerase family. Homodimer.

The protein resides in the cytoplasm. The enzyme catalyses (2S,6S)-2,6-diaminopimelate = meso-2,6-diaminopimelate. It participates in amino-acid biosynthesis; L-lysine biosynthesis via DAP pathway; DL-2,6-diaminopimelate from LL-2,6-diaminopimelate: step 1/1. Catalyzes the stereoinversion of LL-2,6-diaminopimelate (L,L-DAP) to meso-diaminopimelate (meso-DAP), a precursor of L-lysine and an essential component of the bacterial peptidoglycan. This Heliobacterium modesticaldum (strain ATCC 51547 / Ice1) protein is Diaminopimelate epimerase.